The sequence spans 279 residues: Large ribosomal subunit protein uL2 (279 aa).

2 disordered regions span residues 31-61 (KSLLEPLTKSGGRNSAGRKTSRHRGGGHKRH) and 222-279 (GMAM…RNAK). A compositionally biased stretch (basic residues) spans 49–61 (KTSRHRGGGHKRH). The segment covering 232 to 242 (MGGGEGKSKSG) has biased composition (gly residues). Over residues 259-268 (LKTRNRKKAS) the composition is skewed to basic residues.

Belongs to the universal ribosomal protein uL2 family. Part of the 50S ribosomal subunit. Forms a bridge to the 30S subunit in the 70S ribosome.

In terms of biological role, one of the primary rRNA binding proteins. Required for association of the 30S and 50S subunits to form the 70S ribosome, for tRNA binding and peptide bond formation. It has been suggested to have peptidyltransferase activity; this is somewhat controversial. Makes several contacts with the 16S rRNA in the 70S ribosome. The polypeptide is Large ribosomal subunit protein uL2 (Chlorobium chlorochromatii (strain CaD3)).